The chain runs to 439 residues: DNA 3'-5' translocase XPB2 (439 aa).

Positions 1–54 (MVYLRYFKGLILSDAYAPGLKWSDELKAYSALAFKYRDVRKYFLEKEIEVEENV) are DRD domain. One can recognise a Helicase ATP-binding domain in the interval 77-221 (VKAWLKEKRG…LYPILVGPIV (145 aa)). Residues 90–97 (LPTGAGKT) and Arg-127 contribute to the ATP site. The DEAH box signature appears at 174–177 (DEVH). An RED motif motif is present at residues 205–207 (RDD). A flexible hinge region region spans residues 227–234 (EELAGKYI). The tract at residues 248–307 (NEEKKRYDGLRKKLKDFLSSRGLKLQNLDDFHRLVKLAAKDKEAREALLAWHESLNIAVN) is thM region. The Helicase C-terminal domain maps to 311-439 (KIEKLREILQ…DYRLSRRRRE (129 aa)).

Belongs to the helicase family. RAD25/XPB subfamily. As to quaternary structure, forms a heterodimer with Bax1.

It carries out the reaction Couples ATP hydrolysis with the unwinding of duplex DNA by translocating in the 3'-5' direction.. The catalysed reaction is ATP + H2O = ADP + phosphate + H(+). In terms of biological role, ATP-dependent DNA translocase which moves along double-stranded DNA (dsDNA) in a 3'-5' direction, unwinding the DNA. The ThM domain grips the resulting 3'-ssDNA tail and functions as a wedge (particularly Phe-278), breaking dsDNA base pairs, probably using the energy from ATP hydrolysis to move along dsDNA. A DNA-dependent ATPase; double-stranded DNA (dsDNA) stimulates the activity more than single-stranded DNA (ssDNA), while Bax1 stimulates ATPase more. In an in vitro assay had no detectable helicase activity. Binds ssDNA better than dsDNA. Has very low ATPase activity that is stimulated by Bax1; dsDNA, Y-form DNA and a DNA substrate with a 6 base pair (bp) bubble in the center stimulate the XPB2-Bax1 ATPase activity about 10- 20-fold more than the absence of DNA. In an XPB2-Bax1-bubble DNA crystal (12 bp of dsDNA, a 6 base bubble and 6 bp of dsDNA) the short 6 bp arm is unwound. The 2 helicase and the ThM domains of XPB2 with the NTD and CRD domains of Bax1 encircle the DNA, forming a tunnel where the 12 bp dsDNA and the ds-ssDNA junction are located. The ThM domain is wedged between the ssDNA tails, with the 5' ssDNA contacting Bax1 and the 3' ssDNA in a channel in XPB2. Bax1 increases the affinity of XPB2 for forked DNA. In Sulfurisphaera tokodaii (strain DSM 16993 / JCM 10545 / NBRC 100140 / 7) (Sulfolobus tokodaii), this protein is DNA 3'-5' translocase XPB2.